A 900-amino-acid polypeptide reads, in one-letter code: Serine-rich coiled-coil domain-containing protein 1 (900 aa).

Disordered regions lie at residues 1–100 (MGDS…HSNM) and 156–178 (KSEG…QSTR). Residues 29-56 (LPSSPSSSNTVGVHSSSPSSTNSSSGST) show a composition bias toward low complexity. A compositionally biased stretch (polar residues) spans 81 to 100 (EPTNQNLSISNGAQPGHSNM). Positions 673–707 (MKDECSMLKLQLKEKDELISQLQEELGKVRHLQKA) form a coiled coil.

This sequence belongs to the CCSER family.

The polypeptide is Serine-rich coiled-coil domain-containing protein 1 (CCSER1) (Homo sapiens (Human)).